The primary structure comprises 296 residues: Dof zinc finger protein DOF3.7 (296 aa).

Positions 41 to 69 are disordered; sequence NTRPNATASNGGSGGNTNNTATMETRKAR. Positions 45–62 are enriched in low complexity; it reads NATASNGGSGGNTNNTAT. A Dof-type zinc finger spans residues 74–128; that stretch reads VNCPRCNSTNTKFCYYNNYSLTQPRYFCKGCRRYWTEGGSLRNVPVGGSSRKNKR. Zn(2+) contacts are provided by C76, C79, C101, and C104. Residues 115–146 are disordered; the sequence is RNVPVGGSSRKNKRSSTPLASPSNPKLPDLNP. Residues 129–138 show a composition bias toward polar residues; the sequence is SSTPLASPSN.

Expressed in the phloem of the mother plant, including in roots, stem, leaves and flowers, but not present in the seed and embryo. In maturing siliques, found all through the funiculus connecting the placenta to the ovule, but not in the ovule.

It is found in the nucleus. Functionally, transcription factor specifically involved in the maternal control of seed germination. Regulates transcription by binding to a 5'-AA[AG]G-3' consensus core sequence. May ensure the inactivity of a component that would be activated to trigger germination as a consequence of red light perception. The sequence is that of Dof zinc finger protein DOF3.7 (DOF3.7) from Arabidopsis thaliana (Mouse-ear cress).